Here is a 417-residue protein sequence, read N- to C-terminus: MYSKEMRIASYDEELETALTNEARRQEEHIELIASENYVSPRVLEAQGSVLTNKYAEGYPGKRYYGGCEYVDVAERLAIERAKILFEADYANVQPHSGSQANAAACLALLAPGDTLMGLSLAHGGHLTHGAKVNFSGQIFNAVQFGVNADTGLIDYDEVEQLAKAHRPKLIIAGFTAYSRIVDWQRFRAIADGVGAYLLADIAHLAGMIAAGIYPNPVQIADVTTSTTHKTLRGPRSGLILAKANPEIEKKLNSKVFPGIQGGPLMHVVAAKAVAFKEAMEPAFKDYQRQVIRNAQAMAEAIQSRGYKIVSGGTDSHLFLVDLVAKGLTGKAADAALGRANITVNKNTVPNDPQSPFVTSGIRIGSPAMTTRGFKEAEICELAGWVCDVLDDIENETVIADTKEKVLALCARFPVYG.

Residues Leu-121 and 125–127 (GHL) contribute to the (6S)-5,6,7,8-tetrahydrofolate site. Lys-230 carries the post-translational modification N6-(pyridoxal phosphate)lysine. 355–357 (SPF) provides a ligand contact to (6S)-5,6,7,8-tetrahydrofolate.

It belongs to the SHMT family. Homodimer. Pyridoxal 5'-phosphate serves as cofactor.

It is found in the cytoplasm. The enzyme catalyses (6R)-5,10-methylene-5,6,7,8-tetrahydrofolate + glycine + H2O = (6S)-5,6,7,8-tetrahydrofolate + L-serine. Its pathway is one-carbon metabolism; tetrahydrofolate interconversion. It functions in the pathway amino-acid biosynthesis; glycine biosynthesis; glycine from L-serine: step 1/1. Catalyzes the reversible interconversion of serine and glycine with tetrahydrofolate (THF) serving as the one-carbon carrier. This reaction serves as the major source of one-carbon groups required for the biosynthesis of purines, thymidylate, methionine, and other important biomolecules. Also exhibits THF-independent aldolase activity toward beta-hydroxyamino acids, producing glycine and aldehydes, via a retro-aldol mechanism. This is Serine hydroxymethyltransferase from Nitrosococcus oceani (strain ATCC 19707 / BCRC 17464 / JCM 30415 / NCIMB 11848 / C-107).